Here is a 391-residue protein sequence, read N- to C-terminus: Immediate-early protein 2 (391 aa).

The protein belongs to the herpesviridae US22 family.

It localises to the host cytoplasm. It is found in the host nucleus. In terms of biological role, involved in the reactivation of latent MCMV in spleen cells. This chain is Immediate-early protein 2 (IE2), found in Murid herpesvirus 1 (strain Smith) (MuHV-1).